Consider the following 431-residue polypeptide: Trigger factor (431 aa).

A PPIase FKBP-type domain is found at 163–248; sequence GDTVVIDYAG…IHEVKGKELP (86 aa).

This sequence belongs to the FKBP-type PPIase family. Tig subfamily.

The protein resides in the cytoplasm. It carries out the reaction [protein]-peptidylproline (omega=180) = [protein]-peptidylproline (omega=0). In terms of biological role, involved in protein export. Acts as a chaperone by maintaining the newly synthesized protein in an open conformation. Functions as a peptidyl-prolyl cis-trans isomerase. This Latilactobacillus sakei subsp. sakei (strain 23K) (Lactobacillus sakei subsp. sakei) protein is Trigger factor.